Here is a 297-residue protein sequence, read N- to C-terminus: Formylmethanofuran--tetrahydromethanopterin formyltransferase (297 aa).

It belongs to the FTR family. In terms of assembly, homotetramer.

The protein resides in the cytoplasm. The enzyme catalyses N-formylmethanofuran + 5,6,7,8-tetrahydromethanopterin + H(+) = N(5)-formyl-5,6,7,8-tetrahydromethanopterin + methanofuran. The protein operates within one-carbon metabolism; methanogenesis from CO(2); 5,10-methenyl-5,6,7,8-tetrahydromethanopterin from CO(2): step 2/3. In terms of biological role, catalyzes the reversible transfer of a formyl group from formylmethanofuran (formyl-MFR) to tetrahydromethanopterin (H(4)MPT) to produce 5-formyl tetrahydromethanopterin (5-formyl-H(4)MPT) and methanofuran (MFR). The polypeptide is Formylmethanofuran--tetrahydromethanopterin formyltransferase (Methanococcoides burtonii (strain DSM 6242 / NBRC 107633 / OCM 468 / ACE-M)).